The following is a 160-amino-acid chain: Nucleotide-binding protein VC_1508 (160 aa).

This sequence belongs to the YajQ family.

Nucleotide-binding protein. The chain is Nucleotide-binding protein VC_1508 from Vibrio cholerae serotype O1 (strain ATCC 39315 / El Tor Inaba N16961).